We begin with the raw amino-acid sequence, 647 residues long: Leishmanolysin-like peptidase (647 aa).

H264 lines the Zn(2+) pocket. E265 is a catalytic residue. 2 residues coordinate Zn(2+): H268 and H370.

The protein belongs to the peptidase M8 family. Zn(2+) is required as a cofactor. As to expression, expressed in all cell lines analyzed.

It localises to the cytoplasm. It is found in the lipid droplet. Its function is as follows. Metalloprotease. This Homo sapiens (Human) protein is Leishmanolysin-like peptidase (LMLN).